A 404-amino-acid polypeptide reads, in one-letter code: S-adenosylmethionine synthase (404 aa).

Residue H18 coordinates ATP. D20 serves as a coordination point for Mg(2+). A K(+)-binding site is contributed by E46. L-methionine-binding residues include E59 and Q102. The flexible loop stretch occupies residues 102-112 (QSPDIAQGVDT). ATP-binding positions include 177-179 (DGK), 249-250 (KF), D258, 264-265 (RK), A281, and K285. D258 is a binding site for L-methionine. K289 is an L-methionine binding site.

Belongs to the AdoMet synthase family. In terms of assembly, homotetramer; dimer of dimers. Mg(2+) is required as a cofactor. It depends on K(+) as a cofactor.

The protein resides in the cytoplasm. It carries out the reaction L-methionine + ATP + H2O = S-adenosyl-L-methionine + phosphate + diphosphate. It functions in the pathway amino-acid biosynthesis; S-adenosyl-L-methionine biosynthesis; S-adenosyl-L-methionine from L-methionine: step 1/1. Its function is as follows. Catalyzes the formation of S-adenosylmethionine (AdoMet) from methionine and ATP. The overall synthetic reaction is composed of two sequential steps, AdoMet formation and the subsequent tripolyphosphate hydrolysis which occurs prior to release of AdoMet from the enzyme. This Nocardia farcinica (strain IFM 10152) protein is S-adenosylmethionine synthase.